Here is a 354-residue protein sequence, read N- to C-terminus: Caffeic acid 3-O-methyltransferase (354 aa).

Substrate is bound at residue 121-127; that stretch reads MNQDKVL. Positions 153–171 are substrate binding; sequence AFEYHGKDQRFNKVFNSGM. Residues G199, D222, D242, M243, and K256 each contribute to the S-adenosyl-L-methionine site. H260 functions as the Proton acceptor in the catalytic mechanism.

This sequence belongs to the class I-like SAM-binding methyltransferase superfamily. Cation-independent O-methyltransferase family. COMT subfamily. As to quaternary structure, homodimer.

It carries out the reaction (E)-caffeate + S-adenosyl-L-methionine = (E)-ferulate + S-adenosyl-L-homocysteine + H(+). It participates in aromatic compound metabolism; phenylpropanoid biosynthesis. Catalyzes the conversion of caffeic acid to ferulic acid and of 5-hydroxyferulic acid to sinapic acid. The resulting products may subsequently be converted to the corresponding alcohols that are incorporated into lignins. The sequence is that of Caffeic acid 3-O-methyltransferase from Zinnia elegans (Garden zinnia).